Reading from the N-terminus, the 209-residue chain is Large ribosomal subunit protein uL3 (209 aa).

Q150 is modified (N5-methylglutamine).

The protein belongs to the universal ribosomal protein uL3 family. As to quaternary structure, part of the 50S ribosomal subunit. Forms a cluster with proteins L14 and L19. Methylated by PrmB.

Functionally, one of the primary rRNA binding proteins, it binds directly near the 3'-end of the 23S rRNA, where it nucleates assembly of the 50S subunit. The chain is Large ribosomal subunit protein uL3 from Buchnera aphidicola subsp. Schizaphis graminum (strain Sg).